Consider the following 234-residue polypeptide: 2,3,4,5-tetrahydropyridine-2,6-dicarboxylate N-acetyltransferase (234 aa).

Belongs to the transferase hexapeptide repeat family. DapH subfamily.

It carries out the reaction (S)-2,3,4,5-tetrahydrodipicolinate + acetyl-CoA + H2O = L-2-acetamido-6-oxoheptanedioate + CoA. It functions in the pathway amino-acid biosynthesis; L-lysine biosynthesis via DAP pathway; LL-2,6-diaminopimelate from (S)-tetrahydrodipicolinate (acetylase route): step 1/3. Functionally, catalyzes the transfer of an acetyl group from acetyl-CoA to tetrahydrodipicolinate. The polypeptide is 2,3,4,5-tetrahydropyridine-2,6-dicarboxylate N-acetyltransferase (Lacticaseibacillus casei (strain BL23) (Lactobacillus casei)).